A 22-amino-acid chain; its full sequence is 2.4 kDa venom peptide (22 aa).

Post-translationally, contains 2 disulfide bonds. Expressed by the venom gland.

It is found in the secreted. In terms of biological role, not lethal to mice by intraperitoneal or intracerebroventricular injections in doses up to 150 micrograms. This Heterometrus spinifer (Asia giant forest scorpion) protein is 2.4 kDa venom peptide.